A 307-amino-acid polypeptide reads, in one-letter code: Putative oxidoreductase YceM (307 aa).

The protein belongs to the Gfo/Idh/MocA family.

The protein is Putative oxidoreductase YceM (yceM) of Salmonella typhimurium (strain LT2 / SGSC1412 / ATCC 700720).